A 548-amino-acid chain; its full sequence is Ankyrin repeat domain-containing protein SOWAHA (548 aa).

The signal sequence occupies residues 1–19 (MALAAAAAAAAAAAGVSQA). The disordered stretch occupies residues 114 to 212 (EDNCAPGAPH…PPTAQVPPQK (99 aa)). The span at 136–153 (SAPSELQHTPETLPSEVT) shows a compositional bias: polar residues. The span at 198-212 (GPEPAPPTAQVPPQK) shows a compositional bias: pro residues. Phosphoserine is present on S258. 2 ANK repeats span residues 344-373 (SGFT…RGGA) and 383-413 (GGYT…QVHV). The disordered stretch occupies residues 512 to 548 (PRKKTKIRGGLPSFTEISHRSTPGPLAGLVPSLPPPT).

The protein belongs to the SOWAH family.

This Mus musculus (Mouse) protein is Ankyrin repeat domain-containing protein SOWAHA (Sowaha).